We begin with the raw amino-acid sequence, 389 residues long: Growth/differentiation factor 2 (389 aa).

Residues 1–20 form the signal peptide; sequence MWRVGHLLLLMSIVFRITEE. The propeptide occupies 21 to 280; sequence KSLGDAGSLE…PVSNRHRRRK (260 aa). N-linked (GlcNAc...) asparagine glycosylation is found at asparagine 65, asparagine 118, asparagine 127, and asparagine 232. Residues 263-272 show a composition bias toward polar residues; sequence QQQVGNQAPV. Residues 263-284 are disordered; the sequence is QQQVGNQAPVSNRHRRRKRKAK. Residues 274–284 show a composition bias toward basic residues; the sequence is NRHRRRKRKAK. 3 cysteine pairs are disulfide-bonded: cysteine 288–cysteine 354, cysteine 317–cysteine 386, and cysteine 321–cysteine 388. N-linked (GlcNAc...) asparagine glycosylation is present at asparagine 342.

It belongs to the TGF-beta family. In terms of assembly, homodimer; disulfide-linked. In terms of processing, a reversible disulfide bond can be formed between the two subunits in the homodimer; this has no effect on gdf2 activity.

Its subcellular location is the secreted. Its function is as follows. Potent circulating inhibitor of angiogenesis. Signals through the type I activin receptor ACVRL1 but not other Alks. Signaling through SMAD1 in endothelial cells requires TGF-beta coreceptor endoglin/eng. The polypeptide is Growth/differentiation factor 2 (gdf2) (Danio rerio (Zebrafish)).